A 410-amino-acid polypeptide reads, in one-letter code: Multifunctional CCA protein (410 aa).

ATP-binding residues include Gly8 and Arg11. Residues Gly8 and Arg11 each coordinate CTP. The Mg(2+) site is built by Asp21 and Asp23. Residues Arg91, Arg138, and Arg141 each coordinate ATP. CTP-binding residues include Arg91, Arg138, and Arg141. The HD domain occupies 229 to 347 (TGVHQEMVSD…AQLALVCEAD (119 aa)).

It belongs to the tRNA nucleotidyltransferase/poly(A) polymerase family. Bacterial CCA-adding enzyme type 1 subfamily. Monomer. Can also form homodimers and oligomers. Mg(2+) is required as a cofactor. Requires Ni(2+) as cofactor.

The catalysed reaction is a tRNA precursor + 2 CTP + ATP = a tRNA with a 3' CCA end + 3 diphosphate. It catalyses the reaction a tRNA with a 3' CCA end + 2 CTP + ATP = a tRNA with a 3' CCACCA end + 3 diphosphate. Its function is as follows. Catalyzes the addition and repair of the essential 3'-terminal CCA sequence in tRNAs without using a nucleic acid template. Adds these three nucleotides in the order of C, C, and A to the tRNA nucleotide-73, using CTP and ATP as substrates and producing inorganic pyrophosphate. tRNA 3'-terminal CCA addition is required both for tRNA processing and repair. Also involved in tRNA surveillance by mediating tandem CCA addition to generate a CCACCA at the 3' terminus of unstable tRNAs. While stable tRNAs receive only 3'-terminal CCA, unstable tRNAs are marked with CCACCA and rapidly degraded. This chain is Multifunctional CCA protein, found in Xanthomonas campestris pv. campestris (strain B100).